The following is a 159-amino-acid chain: V-type proton ATPase 16 kDa proteolipid subunit c (159 aa).

At 1 to 11 the chain is on the lumenal side; sequence MSEEGSPMYSP. Residues 12–32 form a helical membrane-spanning segment; the sequence is FFGVMGAASAMVFSALGAAYG. The Cytoplasmic segment spans residues 33 to 54; the sequence is TAKSGVGISAMSVMRPELIMKC. A helical transmembrane segment spans residues 55–75; the sequence is IIPVVMAGIIAIYGLVVAVLI. Residues 76–93 are Lumenal-facing; that stretch reads AGKLDEAPTYTLYQGFVH. Residues 94-114 form a helical membrane-spanning segment; the sequence is MGAGLSVGLSGLAAGFAIGIV. At 115-132 the chain is on the cytoplasmic side; that stretch reads GDAGVRGTAQQPRLYVGM. A helical transmembrane segment spans residues 133 to 153; that stretch reads ILILIFAEVLGLYGLIVAIFL. Topologically, residues 154 to 159 are lumenal; it reads YTKTSS.

Belongs to the V-ATPase proteolipid subunit family. V-ATPase is a heteromultimeric enzyme made up of two complexes: the ATP-hydrolytic V1 complex and the proton translocation V0 complex. The V1 complex consists of three catalytic AB heterodimers that form a heterohexamer, three peripheral stalks each consisting of EG heterodimers, one central rotor including subunits D and F, and the regulatory subunits C and H. The proton translocation complex V0 consists of the proton transport subunit a, a ring of proteolipid subunits c9c'', rotary subunit d, subunits e and f, and two accessory subunits.

The protein localises to the vacuole membrane. Its function is as follows. Proton-conducting pore forming subunit of the V0 complex of vacuolar(H+)-ATPase (V-ATPase), a multisubunit enzyme composed of a peripheral complex (V1) that hydrolyzes ATP and a membrane integral complex (V0) that translocates protons. V-ATPase is responsible for acidifying and maintaining the pH of intracellular compartments and in some cell types, is targeted to the plasma membrane, where it is responsible for acidifying the extracellular environment. The sequence is that of V-type proton ATPase 16 kDa proteolipid subunit c from Nephrops norvegicus (Norway lobster).